The sequence spans 344 residues: tRNA(Ile)-lysidine synthase (344 aa).

35–40 (SGGPDS) lines the ATP pocket.

This sequence belongs to the tRNA(Ile)-lysidine synthase family.

The protein resides in the cytoplasm. The catalysed reaction is cytidine(34) in tRNA(Ile2) + L-lysine + ATP = lysidine(34) in tRNA(Ile2) + AMP + diphosphate + H(+). Functionally, ligates lysine onto the cytidine present at position 34 of the AUA codon-specific tRNA(Ile) that contains the anticodon CAU, in an ATP-dependent manner. Cytidine is converted to lysidine, thus changing the amino acid specificity of the tRNA from methionine to isoleucine. This Methylobacterium sp. (strain 4-46) protein is tRNA(Ile)-lysidine synthase.